The chain runs to 157 residues: Endoribonuclease YbeY (157 aa).

Zn(2+)-binding residues include His-113, His-117, and His-123.

This sequence belongs to the endoribonuclease YbeY family. The cofactor is Zn(2+).

Its subcellular location is the cytoplasm. Its function is as follows. Single strand-specific metallo-endoribonuclease involved in late-stage 70S ribosome quality control and in maturation of the 3' terminus of the 16S rRNA. This is Endoribonuclease YbeY from Ehrlichia ruminantium (strain Welgevonden).